The chain runs to 111 residues: Large ribosomal subunit protein uL22 (111 aa).

The protein belongs to the universal ribosomal protein uL22 family. As to quaternary structure, part of the 50S ribosomal subunit.

Its function is as follows. This protein binds specifically to 23S rRNA; its binding is stimulated by other ribosomal proteins, e.g. L4, L17, and L20. It is important during the early stages of 50S assembly. It makes multiple contacts with different domains of the 23S rRNA in the assembled 50S subunit and ribosome. In terms of biological role, the globular domain of the protein is located near the polypeptide exit tunnel on the outside of the subunit, while an extended beta-hairpin is found that lines the wall of the exit tunnel in the center of the 70S ribosome. In Francisella philomiragia subsp. philomiragia (strain ATCC 25017 / CCUG 19701 / FSC 153 / O#319-036), this protein is Large ribosomal subunit protein uL22.